Consider the following 430-residue polypeptide: Adenylosuccinate synthetase (430 aa).

GTP is bound by residues 12–18 (GDEGKGK) and 40–42 (GHT). The active-site Proton acceptor is the aspartate 13. 2 residues coordinate Mg(2+): aspartate 13 and glycine 40. IMP contacts are provided by residues 13 to 16 (DEGK), 38 to 41 (NAGH), threonine 130, arginine 144, glutamine 225, threonine 240, and arginine 304. The Proton donor role is filled by histidine 41. A substrate-binding site is contributed by 300–306 (ATTGRPR). GTP is bound by residues arginine 306, 332–334 (KLD), and 414–416 (SIG).

It belongs to the adenylosuccinate synthetase family. Homodimer. It depends on Mg(2+) as a cofactor.

Its subcellular location is the cytoplasm. It carries out the reaction IMP + L-aspartate + GTP = N(6)-(1,2-dicarboxyethyl)-AMP + GDP + phosphate + 2 H(+). It functions in the pathway purine metabolism; AMP biosynthesis via de novo pathway; AMP from IMP: step 1/2. Plays an important role in the de novo pathway of purine nucleotide biosynthesis. Catalyzes the first committed step in the biosynthesis of AMP from IMP. This chain is Adenylosuccinate synthetase, found in Geobacter metallireducens (strain ATCC 53774 / DSM 7210 / GS-15).